Consider the following 400-residue polypeptide: Flavo-diiron protein FprA2 (400 aa).

Residues 32–216 (GTSYNAYLIK…VVKGLDILDA (185 aa)) are zinc metallo-hydrolase. Fe cation contacts are provided by His79, Glu81, Asp83, His147, Asp166, and His226. Positions 257-397 (IPIFYCSAYG…KAFKFGEDFA (141 aa)) constitute a Flavodoxin-like domain. Residues 263-267 (SAYGN) and 345-372 (AFGS…KVFQ) each bind FMN.

This sequence in the N-terminal section; belongs to the zinc metallo-hydrolase group 3 family. Homotetramer. The cofactor is FMN. Fe cation is required as a cofactor.

The catalysed reaction is 2 NADH + O2 + 2 H(+) = 2 NAD(+) + 2 H2O. Its function is as follows. Catalyzes the four-electron reduction of molecular oxygen to water. In fact, functions as the terminal component of an NADH oxidase (NADH:O(2) oxidoreductase) when using NADH:rubredoxin oxidoreductase (NROR) and rubredoxin (Rd) as electron transport intermediaries between NADH and FDP. Is thus able to reductively scavenge intracellular dioxygen and is part of an oxidative stress defense system in C.acetobutylicum, an obligate anaerobic bacterium. Can also serve as the terminal component of an NADH:nitric oxide oxidoreductase (NOR) with a catalytic efficiency comparable to that of its NADH oxidase activity, and therefore might have an in vivo role in scavenging nitric oxide. This Clostridium acetobutylicum (strain ATCC 824 / DSM 792 / JCM 1419 / IAM 19013 / LMG 5710 / NBRC 13948 / NRRL B-527 / VKM B-1787 / 2291 / W) protein is Flavo-diiron protein FprA2 (fprA2).